The sequence spans 942 residues: Diacylglycerol kinase theta (942 aa).

The interval 1–59 (MAAAAEPGARAWLGGGSPRPGSPACSPVLGSGGRARPGPGPGPGPERAGVRAPGPAAAP) is disordered. A phosphoserine mark is found at Ser-22 and Ser-26. The segment covering 45–59 (PERAGVRAPGPAAAP) has biased composition (low complexity). 3 consecutive Phorbol-ester/DAG-type zinc fingers follow at residues 60 to 108 (GHSF…RIPC), 121 to 168 (AHCF…CSDC), and 183 to 234 (HHHW…APEC). The segment at 269-295 (EPGEGGDGADGSAAVGPGRETQATPES) is disordered. Residues 395–494 (AQEVLKIYPG…TRFYVAESRD (100 aa)) enclose the Ras-associating domain. 2 short sequence motifs (LXXLL motif) span residues 555-559 (LYMLL) and 574-578 (LPDLL). The DAGKc domain maps to 584-721 (PDSCPLLVFV…MDRWTILLDA (138 aa)). Residues 908–942 (PKVHMLRKAKQKPRRAGTTRDARADAAPAPESDPR) form a disordered region. Residues 911–924 (HMLRKAKQKPRRAG) show a composition bias toward basic residues. Positions 932 to 942 (DAAPAPESDPR) are enriched in low complexity.

This sequence belongs to the eukaryotic diacylglycerol kinase family. In terms of assembly, interacts with RHOA (constitutively activated, GTP-bound); the interaction inhibits DGKQ. Interacts with PRKCE. Interacts with PRKCH. Interacts with PLCB1. Interacts with NR5A1; the interaction requires both LXXLL motifs in DGKQ and is required for full phosphatidic acid-mediated activation of NR5A1. Phosphorylated by PRKCE and PRKCH in vitro.

It is found in the cytoplasm. It localises to the cytosol. The protein resides in the cell membrane. Its subcellular location is the synapse. The protein localises to the cytoskeleton. It is found in the nucleus. It localises to the nucleus speckle. The protein resides in the nucleus matrix. It carries out the reaction a 1,2-diacyl-sn-glycerol + ATP = a 1,2-diacyl-sn-glycero-3-phosphate + ADP + H(+). The enzyme catalyses a 1-O-alkyl-sn-glycerol + ATP = a 1-O-alkyl-sn-glycero-3-phosphate + ADP + H(+). The catalysed reaction is 1-O-alkyl-2-acyl-sn-glycerol + ATP = 1-O-alkyl-2-acyl-sn-glycero-3-phosphate + ADP + H(+). It catalyses the reaction 1,2-di-(9Z-octadecenoyl)-sn-glycerol + ATP = 1,2-di-(9Z-octadecenoyl)-sn-glycero-3-phosphate + ADP + H(+). It carries out the reaction 1-O-hexadecyl-sn-glycerol + ATP = 1-O-hexadecyl-sn-glycero-3-phosphate + ADP + H(+). The enzyme catalyses 1-O-hexadecyl-2-acetyl-sn-glycerol + ATP = 1-O-hexadecyl-2-acetyl-sn-glycero-3-phosphate + ADP + H(+). The catalysed reaction is 1-octadecanoyl-2-(5Z,8Z,11Z,14Z-eicosatetraenoyl)-sn-glycerol + ATP = 1-octadecanoyl-2-(5Z,8Z,11Z,14Z-eicosatetraenoyl)-sn-glycero-3-phosphate + ADP + H(+). It participates in lipid metabolism; glycerolipid metabolism. Activated by phosphatidylserine. Its function is as follows. Diacylglycerol kinase that converts diacylglycerol/DAG into phosphatidic acid/phosphatidate/PA and regulates the respective levels of these two bioactive lipids. Thereby, acts as a central switch between the signaling pathways activated by these second messengers with different cellular targets and opposite effects in numerous biological processes. Within the adrenocorticotropic hormone signaling pathway, produces phosphatidic acid which in turn activates NR5A1 and subsequent steroidogenic gene transcription. Also functions downstream of the nerve growth factor signaling pathway being specifically activated in the nucleus by the growth factor. Through its diacylglycerol activity also regulates synaptic vesicle endocytosis. The polypeptide is Diacylglycerol kinase theta (Homo sapiens (Human)).